The chain runs to 608 residues: uncharacterized protein (608 aa).

The N-terminal stretch at 1-38 (MWLQQRLKVFPGLLSSSWARRVLAVSGFLVIIYWYIFS) is a signal peptide. Over 39–563 (GSLFRSFWYA…EEHMAKQYRG (525 aa)) the chain is Extracellular. Asn337 is a glycosylation site (N-linked (GlcNAc...) asparagine). Residues 564-584 (LPFLFWFSVASLITLFHLFLF) form a helical membrane-spanning segment. Topologically, residues 585–608 (KLIYNEYCGPGAKPLFRSKEDTSV) are cytoplasmic.

Its subcellular location is the membrane. This is an uncharacterized protein from Xenopus tropicalis (Western clawed frog).